Here is a 461-residue protein sequence, read N- to C-terminus: Lysosomal dipeptide transporter MFSD1 (461 aa).

Positions 1 to 13 are enriched in basic and acidic residues; that stretch reads MADREEHQGLLDG. A disordered region spans residues 1–22; the sequence is MADREEHQGLLDGDRDEDEGDK. The Dileucine internalization motif motif lies at 10–11; sequence LL. 10 helical membrane-spanning segments follow: residues 37–57, 81–101, 111–131, 134–154, 264–284, 302–322, 331–351, 359–379, 390–410, and 416–436; these read LLHRILVLIFMCFLGFGSYFC, QLYAWYSWPNVVLCFLGGFLL, TVIFSLFVLVGQIIFAAGALA, FWLMNVGRFVFGIGGESLAVA, LWLIFIICVAYYVAIFPFIGL, AINSVVYIISAPASPLLGFLV, WVMLAVITTLLSHMMLAFTFW, LLGVSYSLLACALWPMVAFVV, FMQSIQNLGLAVMSIAAGSIL, and LFLEVFFIACLCMALLAVVLL.

Belongs to the major facilitator superfamily. In terms of assembly, homodimer. Interacts with lysosomal protein GLMP (via lumenal domain); the interaction starts while both proteins are still in the endoplasmic reticulum and is required for stabilization of MFSD1 in lysosomes but has no direct effect on its targeting to lysosomes or transporter activity.

The protein resides in the lysosome membrane. The enzyme catalyses L-alpha-aminoacyl-L-arginine(out) = L-alpha-aminoacyl-L-arginine(in). It carries out the reaction L-arginyl-L-alpha-amino acid(out) = L-arginyl-L-alpha-amino acid(in). The catalysed reaction is L-arginyl-glycine(out) = L-arginyl-glycine(in). It catalyses the reaction L-alpha-aminoacyl-L-lysine(out) = L-alpha-aminoacyl-L-lysine(in). The enzyme catalyses L-aspartyl-L-lysine(out) = L-aspartyl-L-lysine(in). It carries out the reaction L-alanyl-L-lysine(out) = L-alanyl-L-lysine(in). The catalysed reaction is L-lysyl-L-alpha-amino acid(out) = L-lysyl-L-alpha-amino acid(in). It catalyses the reaction L-lysyl-L-alanine(out) = L-lysyl-L-alanine(in). The enzyme catalyses L-lysyl-L-lysine(out) = L-lysyl-L-lysine(in). It carries out the reaction L-lysyl-glycine(out) = L-lysyl-glycine(in). The catalysed reaction is L-alpha-aminoacyl-L-histidine(out) = L-alpha-aminoacyl-L-histidine(in). It catalyses the reaction L-histidyl-L-alpha-amino acid(out) = L-histidyl-L-alpha-amino acid(in). The enzyme catalyses L-histidyl-glycine(out) = L-histidyl-glycine(in). Lysosomal dipeptide uniporter that selectively exports lysine, arginine or histidine-containing dipeptides with a net positive charge from the lysosome lumen into the cytosol. Could play a role in a specific type of protein O-glycosylation indirectly regulating macrophages migration and tissue invasion. Also essential for liver homeostasis. In Danio rerio (Zebrafish), this protein is Lysosomal dipeptide transporter MFSD1 (mfsd1).